We begin with the raw amino-acid sequence, 1563 residues long: Ribulose bisphosphate carboxylase (1563 aa).

Substrate contacts are provided by His-32 and Ser-79. Positions 197–217 (LAAAFVGASTTRKASSVARRA) are cleaved as a propeptide — linker. Asn-328 provides a ligand contact to substrate. Lys-383 acts as the Proton acceptor in catalysis. Substrate is bound at residue Lys-385. Lys-408, Asp-410, and Glu-411 together coordinate Mg(2+). Lys-408 is subject to N6-carboxylysine. The active-site Proton acceptor is His-504. Substrate is bound by residues Arg-505, His-538, and Ser-585. Positions 703–723 (LAAAFVGASTTRKASSVARRA) are cleaved as a propeptide — linker. Asn-834 lines the substrate pocket. Residue Lys-889 is the Proton acceptor of the active site. Substrate is bound at residue Lys-891. 3 residues coordinate Mg(2+): Lys-914, Asp-916, and Glu-917. Lys-914 is subject to N6-carboxylysine. His-1010 functions as the Proton acceptor in the catalytic mechanism. Residues Arg-1011, His-1044, and Ser-1091 each contribute to the substrate site. A propeptide spans 1209 to 1229 (LAAAFVGASTTRKASSVARRA) (linker). Asn-1340 serves as a coordination point for substrate. Catalysis depends on Lys-1395, which acts as the Proton acceptor. Lys-1397 provides a ligand contact to substrate. 3 residues coordinate Mg(2+): Lys-1420, Asp-1422, and Glu-1423. At Lys-1420 the chain carries N6-carboxylysine. Residue His-1516 is the Proton acceptor of the active site. The substrate site is built by Arg-1517 and His-1550.

This sequence belongs to the RuBisCO large chain family. Type II subfamily. In terms of assembly, homodimer. Mg(2+) serves as cofactor. Post-translationally, in Western blots an approximately 220 kDa polyprotein and 2 smaller proteins of about 55 and 52 kDa are detected, suggesting the polyprotein may be cleaved at one end of the linker and then at the other end to give mature RuBisCO.

It is found in the plastid. The protein resides in the chloroplast. The enzyme catalyses 2 (2R)-3-phosphoglycerate + 2 H(+) = D-ribulose 1,5-bisphosphate + CO2 + H2O. It carries out the reaction D-ribulose 1,5-bisphosphate + O2 = 2-phosphoglycolate + (2R)-3-phosphoglycerate + 2 H(+). In terms of biological role, ruBisCO catalyzes two reactions: the carboxylation of D-ribulose 1,5-bisphosphate, the primary event in carbon dioxide fixation, as well as the oxidative fragmentation of the pentose substrate. Both reactions occur simultaneously and in competition at the same active site. In Prorocentrum minimum (Dinoflagellate), this protein is Ribulose bisphosphate carboxylase (rbcL).